A 119-amino-acid chain; its full sequence is Non-specific lipid-transfer protein 11 (119 aa).

The N-terminal stretch at 1–28 (MRNITTTTRKMLLLVITILLGIAYHGEA) is a signal peptide. Cystine bridges form between Cys-31/Cys-78, Cys-41/Cys-55, Cys-56/Cys-101, and Cys-76/Cys-115.

This sequence belongs to the plant LTP family.

Plant non-specific lipid-transfer proteins transfer phospholipids as well as galactolipids across membranes. May play a role in wax or cutin deposition in the cell walls of expanding epidermal cells and certain secretory tissues. The protein is Non-specific lipid-transfer protein 11 (LTP11) of Arabidopsis thaliana (Mouse-ear cress).